The following is a 241-amino-acid chain: Ribosomal RNA small subunit methyltransferase J (241 aa).

Residues 94–95 (RD) and Asp-163 each bind S-adenosyl-L-methionine.

It belongs to the methyltransferase superfamily. RsmJ family.

The protein localises to the cytoplasm. The catalysed reaction is guanosine(1516) in 16S rRNA + S-adenosyl-L-methionine = N(2)-methylguanosine(1516) in 16S rRNA + S-adenosyl-L-homocysteine + H(+). Functionally, specifically methylates the guanosine in position 1516 of 16S rRNA. This Francisella tularensis subsp. novicida (strain U112) protein is Ribosomal RNA small subunit methyltransferase J.